A 303-amino-acid chain; its full sequence is D-alanine--D-alanine ligase (303 aa).

One can recognise an ATP-grasp domain in the interval 99 to 293 (TYRFLKDIVE…FEELVEIILK (195 aa)). Position 125 to 176 (125 to 176 (GYPCVVKPRREGSSIGVFICESDEEFQHALKEDLPRYGSVIVQKYIPGREMT)) interacts with ATP. 3 residues coordinate Mg(2+): aspartate 248, glutamate 260, and asparagine 262.

Belongs to the D-alanine--D-alanine ligase family. Mg(2+) serves as cofactor. It depends on Mn(2+) as a cofactor.

Its subcellular location is the cytoplasm. The enzyme catalyses 2 D-alanine + ATP = D-alanyl-D-alanine + ADP + phosphate + H(+). It functions in the pathway cell wall biogenesis; peptidoglycan biosynthesis. In terms of biological role, cell wall formation. The sequence is that of D-alanine--D-alanine ligase from Thermotoga petrophila (strain ATCC BAA-488 / DSM 13995 / JCM 10881 / RKU-1).